The sequence spans 437 residues: 2-methylisoborneol synthase (437 aa).

A disordered region spans residues 32-125 (AHDSEATVGG…IPGLYHHPVP (94 aa)). The span at 59–73 (PPSPAAPPTDVPAPE) shows a compositional bias: pro residues. Mg(2+) contacts are provided by aspartate 194, aspartate 195, glutamate 199, asparagine 342, serine 346, and glutamate 350.

Belongs to the terpene synthase family. 2-methylisoborneol synthase subfamily. Mg(2+) serves as cofactor.

The catalysed reaction is (E)-2-methylgeranyl diphosphate + H2O = 2-methylisoborneol + diphosphate. Its function is as follows. Catalyzes the cyclization of 2-methylgeranyl diphosphate (2-MeGPP) to 2-methylisoborneol (2-MIB), which likely involves the intermediacy of 2-methyllinalyl diphosphate. In Streptomyces griseus, this protein is 2-methylisoborneol synthase.